Reading from the N-terminus, the 698-residue chain is PWWP domain-containing DNA repair factor 3A (698 aa).

Disordered regions lie at residues 102 to 145 (TSLS…EDDQ) and 159 to 386 (CSPK…EEPP). A Phosphoserine modification is found at S105. A compositionally biased stretch (polar residues) spans 129-139 (SQVSSAPSPSF). S165, S168, and S170 each carry phosphoserine. A compositionally biased stretch (polar residues) spans 200–211 (DESQNGSGSQLD). 2 stretches are compositionally biased toward basic and acidic residues: residues 212–235 (HGQESTTKKRQRNSGEKPARRGKA) and 341–350 (RAGDSDRPEE). 2 positions are modified to phosphoserine: S355 and S356. Over residues 370 to 384 (EEEEEEEEEEEEEEE) the composition is skewed to acidic residues. The PWWP domain occupies 399 to 460 (VGMLVWLKYQ…KHFDCKEKHA (62 aa)).

It belongs to the PWWP3A family. Interacts with TP53BP1 (via BRCT domain); the interaction is not dependent on its phosphorylation status. Binds nucleosomes. Interacts with trimethylated 'Lys-36' of histone H3 (H3K36me3) (in vitro).

Its subcellular location is the nucleus. Its function is as follows. Involved in the DNA damage response pathway by contributing to the maintenance of chromatin architecture. Recruited to the vicinity of DNA breaks by TP53BP1 and plays an accessory role to facilitate damage-induced chromatin changes and promoting chromatin relaxation. Required for efficient DNA repair and cell survival following DNA damage. The sequence is that of PWWP domain-containing DNA repair factor 3A from Rattus norvegicus (Rat).